A 318-amino-acid chain; its full sequence is DNA polymerase IV (318 aa).

The region spanning 6 to 186 (IIHIDMDAFY…LPLGKIPGVG (181 aa)) is the UmuC domain. Mg(2+) is bound by residues D10 and D104. E105 is an active-site residue.

The protein belongs to the DNA polymerase type-Y family. Monomer. The cofactor is Mg(2+).

Its subcellular location is the cytoplasm. It carries out the reaction DNA(n) + a 2'-deoxyribonucleoside 5'-triphosphate = DNA(n+1) + diphosphate. Poorly processive, error-prone DNA polymerase involved in untargeted mutagenesis. Copies undamaged DNA at stalled replication forks, which arise in vivo from mismatched or misaligned primer ends. These misaligned primers can be extended by PolIV. Exhibits no 3'-5' exonuclease (proofreading) activity. May be involved in translesional synthesis, in conjunction with the beta clamp from PolIII. The sequence is that of DNA polymerase IV from Neisseria meningitidis serogroup B (strain ATCC BAA-335 / MC58).